A 488-amino-acid polypeptide reads, in one-letter code: Ribulose bisphosphate carboxylase large chain (488 aa).

Substrate-binding residues include N127 and T177. Residue K179 is the Proton acceptor of the active site. Substrate is bound at residue K181. Residues K205, D207, and E208 each contribute to the Mg(2+) site. Position 205 is an N6-carboxylysine (K205). H297 (proton acceptor) is an active-site residue. Residues R298, H330, and S382 each coordinate substrate.

It belongs to the RuBisCO large chain family. Type I subfamily. As to quaternary structure, heterohexadecamer of 8 large chains and 8 small chains. The cofactor is Mg(2+).

The protein localises to the plastid. It localises to the chloroplast. It carries out the reaction 2 (2R)-3-phosphoglycerate + 2 H(+) = D-ribulose 1,5-bisphosphate + CO2 + H2O. It catalyses the reaction D-ribulose 1,5-bisphosphate + O2 = 2-phosphoglycolate + (2R)-3-phosphoglycerate + 2 H(+). In terms of biological role, ruBisCO catalyzes two reactions: the carboxylation of D-ribulose 1,5-bisphosphate, the primary event in carbon dioxide fixation, as well as the oxidative fragmentation of the pentose substrate in the photorespiration process. Both reactions occur simultaneously and in competition at the same active site. The polypeptide is Ribulose bisphosphate carboxylase large chain (Porphyra purpurea (Red seaweed)).